The sequence spans 275 residues: Stage 0 sporulation protein YaaT (275 aa).

In terms of domain architecture, PSP1 C-terminal spans 61–146 (RKVIRVADDR…FKTRIELRQI (86 aa)).

Its subcellular location is the cytoplasm. Its function is as follows. Essential for the phosphorelay during initiation of sporulation. May control the level of phosphorylated spo0A through spo0E activity during sporulation. This Bacillus subtilis (strain 168) protein is Stage 0 sporulation protein YaaT (yaaT).